We begin with the raw amino-acid sequence, 248 residues long: Mitochondrial import inner membrane translocase subunit Tim21 (248 aa).

Residues 1-18 constitute a mitochondrion transit peptide; the sequence is MICTFLRAVQYTEKLHRS. Residues 67–98 are disordered; that stretch reads TQGPSPRKAKEDGSKQVSVHRSQRGGTAVPTS. The chain crosses the membrane as a helical span at residues 108 to 128; the sequence is FTYLIVVLFGISITGGLFYTI.

It belongs to the TIM21 family. Component of the TIM23 complex. Component of the MITRAC (mitochondrial translation regulation assembly intermediate of cytochrome c oxidase complex) complex, the core components of this complex being COA3/MITRAC12 and COX14. Interacts with COA3 and MT-CO1/COX1.

It localises to the mitochondrion membrane. Functionally, participates in the translocation of transit peptide-containing proteins across the mitochondrial inner membrane. Also required for assembly of mitochondrial respiratory chain complex I and complex IV as component of the MITRAC (mitochondrial translation regulation assembly intermediate of cytochrome c oxidase complex) complex. Probably shuttles between the presequence translocase and respiratory-chain assembly intermediates in a process that promotes incorporation of early nuclear-encoded subunits into these complexes. This is Mitochondrial import inner membrane translocase subunit Tim21 (TIMM21) from Homo sapiens (Human).